Reading from the N-terminus, the 648-residue chain is Biosynthetic arginine decarboxylase (648 aa).

Position 109 is an N6-(pyridoxal phosphate)lysine (K109). 291–301 provides a ligand contact to substrate; it reads IDVGGGLGIDF.

Belongs to the Orn/Lys/Arg decarboxylase class-II family. SpeA subfamily. Mg(2+) is required as a cofactor. The cofactor is pyridoxal 5'-phosphate.

The catalysed reaction is L-arginine + H(+) = agmatine + CO2. It participates in amine and polyamine biosynthesis; agmatine biosynthesis; agmatine from L-arginine: step 1/1. In terms of biological role, catalyzes the biosynthesis of agmatine from arginine. The polypeptide is Biosynthetic arginine decarboxylase (Prochlorococcus marinus (strain MIT 9515)).